An 84-amino-acid polypeptide reads, in one-letter code: MSNEINLQEFKMHEKDSGSSSYQIARLTQRIAHLTEHLSTNKHDVSSRRGLLKMVALRRKLLDYVKREDMAQYQSLIQRLGLRR.

It belongs to the universal ribosomal protein uS15 family. In terms of assembly, part of the 30S ribosomal subunit. Forms a bridge to the 50S subunit in the 70S ribosome, contacting the 23S rRNA.

In terms of biological role, one of the primary rRNA binding proteins, it binds directly to 16S rRNA where it helps nucleate assembly of the platform of the 30S subunit by binding and bridging several RNA helices of the 16S rRNA. Functionally, forms an intersubunit bridge (bridge B4) with the 23S rRNA of the 50S subunit in the ribosome. This is Small ribosomal subunit protein uS15 from Akkermansia muciniphila (strain ATCC BAA-835 / DSM 22959 / JCM 33894 / BCRC 81048 / CCUG 64013 / CIP 107961 / Muc).